A 207-amino-acid polypeptide reads, in one-letter code: MAEYTLPDLDWDYAALEPHISGEINEIHHTKHHAAYVKGVNDALAKLDEARAKDDHSAIFLNEKNLAFHLGGHVNHSIWWKNLSPNGGDKPTGGLATDIDETFGSFDKFRAQFSAAANGLQGSGWAVLGYDTLGNKLLTFQLYDQQANVSLGIIPLLQVDMWEHAFYLQYKNVKADYVKAFWNVVNWADVQSRYMAATSKTQGLIFD.

The Mn(2+) site is built by H28, H76, D160, and H164.

Belongs to the iron/manganese superoxide dismutase family. It depends on Mn(2+) as a cofactor.

It carries out the reaction 2 superoxide + 2 H(+) = H2O2 + O2. Its function is as follows. Destroys superoxide anion radicals which are normally produced within the cells and which are toxic to biological systems. This is Superoxide dismutase [Mn] (sodA) from Mycobacterium leprae (strain TN).